Here is a 67-residue protein sequence, read N- to C-terminus: MDARLLEILVCPICKGPLSYDRAAQELICNADKLAYPIRDGIPVMLVDEARQTVEGTPVDLNPGSVA.

This sequence belongs to the UPF0434 family.

In Paraburkholderia phymatum (strain DSM 17167 / CIP 108236 / LMG 21445 / STM815) (Burkholderia phymatum), this protein is UPF0434 protein Bphy_0537.